Here is a 476-residue protein sequence, read N- to C-terminus: Vitamin D-binding protein (476 aa).

The signal sequence occupies residues 1–16 (MKRVLVLLLALAFGHA). Albumin domains are found at residues 17–208 (LERG…QMKQ), 209–394 (LLLL…LMKR), and 395–476 (QLTS…ILQS). Intrachain disulfides connect Cys-29–Cys-75, Cys-74–Cys-83, Cys-96–Cys-112, Cys-111–Cys-122, Cys-145–Cys-190, Cys-189–Cys-198, Cys-220–Cys-266, Cys-265–Cys-273, Cys-286–Cys-300, Cys-299–Cys-311, Cys-335–Cys-376, Cys-375–Cys-384, Cys-407–Cys-453, and Cys-452–Cys-462. The N-linked (GlcNAc...) asparagine glycan is linked to Asn-288. Ser-434 carries the phosphoserine modification.

The protein belongs to the ALB/AFP/VDB family. As to quaternary structure, associates with membrane-bound immunoglobulin on the surface of B-lymphocytes and with IgG Fc receptor on the membranes of T-lymphocytes. Interacts with LRP2; the interaction is required for renal uptake of GC in complex with 25-hydroxyvitamin D3.

It localises to the secreted. Its function is as follows. Involved in vitamin D transport and storage, scavenging of extracellular G-actin, enhancement of the chemotactic activity of C5 alpha for neutrophils in inflammation and macrophage activation. The sequence is that of Vitamin D-binding protein (Gc) from Rattus norvegicus (Rat).